The following is a 129-amino-acid chain: Histone H2A-IV (129 aa).

Positions 1–22 (MSGRGKQGGKARAKAKSRSSRA) are disordered. N-acetylserine is present on Ser2. Residue Ser2 is modified to Phosphoserine. Residue Lys6 is modified to N6-(2-hydroxyisobutyryl)lysine. 2 positions are modified to N6-acetyllysine: Lys6 and Lys10. The span at 7-19 (QGGKARAKAKSRS) shows a compositional bias: basic residues. Residue Lys10 is modified to N6-(2-hydroxyisobutyryl)lysine; alternate. Lys10 bears the N6-lactoyllysine; alternate mark. Position 10 is an N6-succinyllysine (Lys10). Glycyl lysine isopeptide (Lys-Gly) (interchain with G-Cter in ubiquitin) cross-links involve residues Lys14 and Lys16. Lys37 carries the N6-(2-hydroxyisobutyryl)lysine; alternate modification. An N6-(2-hydroxyisobutyryl)lysine mark is found at Lys75 and Lys76. Lys96 carries the N6-(2-hydroxyisobutyryl)lysine; alternate modification. Lys96 carries the N6-succinyllysine modification. Position 96 is an N6-glutaryllysine; alternate (Lys96). Lys100 is modified (N6-glutaryllysine). An N5-methylglutamine modification is found at Gln105. Lys119 carries the post-translational modification N6-(2-hydroxyisobutyryl)lysine; alternate. Lys119 and Lys120 each carry N6-glutaryllysine; alternate. Residue Lys120 forms a Glycyl lysine isopeptide (Lys-Gly) (interchain with G-Cter in ubiquitin) linkage.

It belongs to the histone H2A family. As to quaternary structure, the nucleosome is a histone octamer containing two molecules each of H2A, H2B, H3 and H4 assembled in one H3-H4 heterotetramer and two H2A-H2B heterodimers. The octamer wraps approximately 147 bp of DNA. Monoubiquitination of Lys-120 (H2AK119Ub) gives a specific tag for epigenetic transcriptional repression. Following DNA double-strand breaks (DSBs), it is ubiquitinated through 'Lys-63' linkage of ubiquitin moieties, leading to the recruitment of repair proteins to sites of DNA damage. H2AK119Ub and ionizing radiation-induced 'Lys-63'-linked ubiquitination are distinct events. In terms of processing, phosphorylation on Ser-2 is enhanced during mitosis. Phosphorylation on Ser-2 directly represses transcription. Post-translationally, glutamine methylation at Gln-105 (H2AQ104me) by FBL is specifically dedicated to polymerase I. It is present at 35S ribosomal DNA locus and impairs binding of the FACT complex.

The protein resides in the nucleus. It is found in the chromosome. Core component of nucleosome. Nucleosomes wrap and compact DNA into chromatin, limiting DNA accessibility to the cellular machineries which require DNA as a template. Histones thereby play a central role in transcription regulation, DNA repair, DNA replication and chromosomal stability. DNA accessibility is regulated via a complex set of post-translational modifications of histones, also called histone code, and nucleosome remodeling. This is Histone H2A-IV from Gallus gallus (Chicken).